Reading from the N-terminus, the 361-residue chain is Aromatic amino acid aminotransferase (361 aa).

K221 carries the post-translational modification N6-(pyridoxal phosphate)lysine.

Belongs to the class-II pyridoxal-phosphate-dependent aminotransferase family. As to quaternary structure, homodimer. Pyridoxal 5'-phosphate serves as cofactor.

The enzyme catalyses an aromatic L-alpha-amino acid + 2-oxoglutarate = an aromatic oxo-acid + L-glutamate. Its function is as follows. Aminotransferase that catalyzes the conversion of aromatic amino acids and 2-oxoglutarate into corresponding aromatic oxo acids and L-glutamate. The chain is Aromatic amino acid aminotransferase from Mycobacterium ulcerans (strain Agy99).